Consider the following 708-residue polypeptide: Metal-pseudopaline receptor CntO (708 aa).

Residues methionine 1–tryptophan 21 form the signal peptide. The region spanning arginine 63–lysine 169 is the TBDR plug domain. Residues glutamate 174–tyrosine 708 enclose the TBDR beta-barrel domain.

Belongs to the TonB-dependent receptor family.

The protein resides in the cell outer membrane. Functionally, transports the metallophore pseudopaline, which is involved in the acquisition of nickel and zinc, and thus enables bacterial growth inside the host, where metal access is limited. Is probably involved in the import of pseudopaline-metal complexes. The polypeptide is Metal-pseudopaline receptor CntO (Pseudomonas aeruginosa (strain UCBPP-PA14)).